An 811-amino-acid polypeptide reads, in one-letter code: U-box domain-containing protein 43 (811 aa).

Residues 24–103 (NIYEAFICPL…EEWRARNDAL (80 aa)) enclose the U-box domain. ARM repeat units lie at residues 136–175 (RKIR…VVVE), 178–217 (EESK…ELSK), 220–261 (ALCE…NLER), 263–302 (EENV…VLAL), 303–342 (NNDV…NISS), 344–388 (EGSA…NIVN), 399–438 (GPHH…GLTS), 444–484 (INVV…NISP), and 489–528 (ELAN…LLAE).

It carries out the reaction S-ubiquitinyl-[E2 ubiquitin-conjugating enzyme]-L-cysteine + [acceptor protein]-L-lysine = [E2 ubiquitin-conjugating enzyme]-L-cysteine + N(6)-ubiquitinyl-[acceptor protein]-L-lysine.. Its pathway is protein modification; protein ubiquitination. Functionally, functions as an E3 ubiquitin ligase. In Arabidopsis thaliana (Mouse-ear cress), this protein is U-box domain-containing protein 43 (PUB43).